We begin with the raw amino-acid sequence, 503 residues long: Secreted RxLR effector protein RXLR-C08 (503 aa).

Positions 1–22 (MRLCGVASAFLSTLILIAHIDA) are cleaved as a signal peptide. N-linked (GlcNAc...) asparagine glycans are attached at residues Asn-27, Asn-35, and Asn-45. The short motif at 57 to 60 (DEER) is the dEER element. N-linked (GlcNAc...) asparagine glycosylation is found at Asn-108, Asn-197, and Asn-374.

This sequence belongs to the RxLR effector family.

It localises to the secreted. The protein localises to the host Golgi apparatus. In terms of biological role, secreted effector that suppresses pattern-triggered immunity (PTI) in plant host. The chain is Secreted RxLR effector protein RXLR-C08 from Plasmopara halstedii (Downy mildew of sunflower).